We begin with the raw amino-acid sequence, 168 residues long: Protein A40 (168 aa).

Over 1–9 (MNKPKTDYA) the chain is Cytoplasmic. The chain crosses the membrane as a helical; Signal-anchor for type II membrane protein span at residues 10–30 (GYACCVICGLIVGIIFTATLL). Residues 31–168 (KVVERKLVHT…TTFLSYHYFG (138 aa)) are Extracellular-facing. In terms of domain architecture, C-type lectin spans 63-168 (YNNKCIHLST…TTFLSYHYFG (106 aa)).

The protein belongs to the poxviridae A40 protein family.

It localises to the host membrane. This chain is Protein A40, found in Homo sapiens (Human).